The primary structure comprises 1092 residues: Electroneutral sodium bicarbonate exchanger 1 (1092 aa).

Disordered stretches follow at residues M1–G26, L55–P95, and K243–A263. The Extracellular segment spans residues M1–C478. Residues Q58–R76 show a composition bias toward basic residues. The span at K243–G255 shows a compositional bias: basic and acidic residues. The helical transmembrane segment at L479 to L499 threads the bilayer. The Cytoplasmic segment spans residues L500–R507. Residues I508–A528 form a helical membrane-spanning segment. The Extracellular segment spans residues G529–C565. A helical transmembrane segment spans residues I566–V586. Residues C587–E595 are Cytoplasmic-facing. A helical transmembrane segment spans residues A596 to L616. The Extracellular portion of the chain corresponds to A617–H687. 2 cysteine pairs are disulfide-bonded: C636/C684 and C638/C672. N-linked (GlcNAc) asparagine glycosylation is found at N646 and N666. A helical membrane pass occupies residues G688–V708. The Cytoplasmic portion of the chain corresponds to S709–D731. Residues F732 to S752 traverse the membrane as a helical segment. Over P753–N778 the chain is Extracellular. Residues P779–M799 traverse the membrane as a helical segment. Residues D800–D824 lie on the Cytoplasmic side of the membrane. The helical transmembrane segment at L825–A845 threads the bilayer. Residues A846 to T881 are Extracellular-facing. A helical transmembrane segment spans residues G882–I902. Over P903–M904 the chain is Cytoplasmic. A helical membrane pass occupies residues P905 to F925. Topologically, residues D926–C962 are extracellular. Residues L963 to L983 traverse the membrane as a helical segment. Over A984 to N1092 the chain is Cytoplasmic.

It belongs to the anion exchanger (TC 2.A.31) family. As to quaternary structure, homodimer. In terms of tissue distribution, expressed in the Purkinje cells and dendrites in the molecular layer of the cerebellum (at protein level). Expressed in the hippocampal neurons (at protein level). Strong expression observed in testis and moderate expression in kidney inner medulla, the submandibular gland, eye, cerebrum and cerebellum.

The protein resides in the cell membrane. The protein localises to the apical cell membrane. It is found in the basolateral cell membrane. Its subcellular location is the cytoplasmic vesicle. It localises to the secretory vesicle. The protein resides in the synaptic vesicle membrane. The enzyme catalyses 2 hydrogencarbonate(out) + chloride(in) + Na(+)(out) = 2 hydrogencarbonate(in) + chloride(out) + Na(+)(in). Mediates electroneutral sodium- and carbonate-dependent chloride-HCO3(-) exchange with a Na(+):HCO3(-) stoichiometry of 2:1. Plays a major role in pH regulation in neurons. Mediates sodium reabsorption in the renal cortical collecting ducts. This chain is Electroneutral sodium bicarbonate exchanger 1, found in Rattus norvegicus (Rat).